The sequence spans 188 residues: Elongation factor P (188 aa).

It belongs to the elongation factor P family.

The protein resides in the cytoplasm. It participates in protein biosynthesis; polypeptide chain elongation. Involved in peptide bond synthesis. Stimulates efficient translation and peptide-bond synthesis on native or reconstituted 70S ribosomes in vitro. Probably functions indirectly by altering the affinity of the ribosome for aminoacyl-tRNA, thus increasing their reactivity as acceptors for peptidyl transferase. This is Elongation factor P from Ralstonia nicotianae (strain ATCC BAA-1114 / GMI1000) (Ralstonia solanacearum).